Consider the following 273-residue polypeptide: Putative phosphoenolpyruvate synthase regulatory protein (273 aa).

153–160 lines the ADP pocket; it reads AVSRAGKT.

This sequence belongs to the pyruvate, phosphate/water dikinase regulatory protein family. PSRP subfamily.

It catalyses the reaction [pyruvate, water dikinase] + ADP = [pyruvate, water dikinase]-phosphate + AMP + H(+). The catalysed reaction is [pyruvate, water dikinase]-phosphate + phosphate + H(+) = [pyruvate, water dikinase] + diphosphate. Bifunctional serine/threonine kinase and phosphorylase involved in the regulation of the phosphoenolpyruvate synthase (PEPS) by catalyzing its phosphorylation/dephosphorylation. The protein is Putative phosphoenolpyruvate synthase regulatory protein of Xylella fastidiosa (strain M12).